The chain runs to 237 residues: Endonuclease V (237 aa).

Positions 46 and 114 each coordinate Mg(2+).

The protein belongs to the endonuclease V family. Mg(2+) is required as a cofactor.

It localises to the cytoplasm. The catalysed reaction is Endonucleolytic cleavage at apurinic or apyrimidinic sites to products with a 5'-phosphate.. In terms of biological role, DNA repair enzyme involved in the repair of deaminated bases. Selectively cleaves double-stranded DNA at the second phosphodiester bond 3' to a deoxyinosine leaving behind the intact lesion on the nicked DNA. The sequence is that of Endonuclease V from Xanthomonas axonopodis pv. citri (strain 306).